The following is an 82-amino-acid chain: Large ribosomal subunit protein bL31B (82 aa).

It belongs to the bacterial ribosomal protein bL31 family. Type B subfamily. As to quaternary structure, part of the 50S ribosomal subunit.

The protein is Large ribosomal subunit protein bL31B of Dichelobacter nodosus (strain VCS1703A).